We begin with the raw amino-acid sequence, 552 residues long: Hydroxylamine reductase (552 aa).

Residues C3, C6, C18, and C25 each contribute to the [2Fe-2S] cluster site. Hybrid [4Fe-2O-2S] cluster-binding residues include H250, E274, C318, C406, C434, C459, E493, and K495. C406 is subject to Cysteine persulfide.

The protein belongs to the HCP family. [2Fe-2S] cluster is required as a cofactor. The cofactor is hybrid [4Fe-2O-2S] cluster.

Its subcellular location is the cytoplasm. The catalysed reaction is A + NH4(+) + H2O = hydroxylamine + AH2 + H(+). Catalyzes the reduction of hydroxylamine to form NH(3) and H(2)O. This chain is Hydroxylamine reductase, found in Shewanella sediminis (strain HAW-EB3).